We begin with the raw amino-acid sequence, 374 residues long: Eukaryotic translation initiation factor 3 subunit M (374 aa).

In terms of domain architecture, PCI spans 180 to 339 (EAAKVMVELL…KKVVVSHSTH (160 aa)).

Belongs to the eIF-3 subunit M family. In terms of assembly, component of the eukaryotic translation initiation factor 3 (eIF-3) complex, which is composed of 13 subunits: eif3a, eif3b, eif3c, eif3d, eif3e, eif3f, eif3g, eif3h, eif3i, eif3j, eif3k, eif3l and eif3m.

It localises to the cytoplasm. In terms of biological role, component of the eukaryotic translation initiation factor 3 (eIF-3) complex, which is involved in protein synthesis of a specialized repertoire of mRNAs and, together with other initiation factors, stimulates binding of mRNA and methionyl-tRNAi to the 40S ribosome. The eIF-3 complex specifically targets and initiates translation of a subset of mRNAs involved in cell proliferation. The protein is Eukaryotic translation initiation factor 3 subunit M (eif3m) of Xenopus laevis (African clawed frog).